Reading from the N-terminus, the 605-residue chain is Elongation factor 4 (605 aa).

In terms of domain architecture, tr-type G spans 9–191; sequence DTIRNFCIIA…AIIKRVPAPV (183 aa). GTP contacts are provided by residues 21–26 and 138–141; these read DHGKST and NKID.

The protein belongs to the TRAFAC class translation factor GTPase superfamily. Classic translation factor GTPase family. LepA subfamily.

The protein resides in the cell inner membrane. It catalyses the reaction GTP + H2O = GDP + phosphate + H(+). Required for accurate and efficient protein synthesis under certain stress conditions. May act as a fidelity factor of the translation reaction, by catalyzing a one-codon backward translocation of tRNAs on improperly translocated ribosomes. Back-translocation proceeds from a post-translocation (POST) complex to a pre-translocation (PRE) complex, thus giving elongation factor G a second chance to translocate the tRNAs correctly. Binds to ribosomes in a GTP-dependent manner. The chain is Elongation factor 4 from Chlorobium phaeobacteroides (strain BS1).